A 375-amino-acid polypeptide reads, in one-letter code: Growth/differentiation factor 8 (375 aa).

The signal sequence occupies residues 1 to 23; it reads MQKIVVYVYIYLFVQISVDPVAL. The propeptide occupies 24–266; that stretch reads DGSSQPTENT…VTDTPKRSRR (243 aa). N71 carries N-linked (GlcNAc...) asparagine glycosylation. Cystine bridges form between C272–C282, C281–C340, C309–C372, and C313–C374.

Belongs to the TGF-beta family. Homodimer; disulfide-linked.

It is found in the secreted. Functionally, acts specifically as a negative regulator of skeletal muscle growth. This Coturnix coturnix (Common quail) protein is Growth/differentiation factor 8 (MSTN).